A 330-amino-acid polypeptide reads, in one-letter code: ADP-L-glycero-D-manno-heptose-6-epimerase (330 aa).

NADP(+) is bound by residues 11 to 12, 32 to 33, lysine 39, lysine 54, 75 to 79, and asparagine 92; these read FI, DN, and EGACS. The active-site Proton acceptor is tyrosine 139. Lysine 143 lines the NADP(+) pocket. Asparagine 168 is a binding site for substrate. NADP(+) contacts are provided by valine 169 and lysine 177. Lysine 177 (proton acceptor) is an active-site residue. Substrate-binding positions include arginine 179, histidine 186, 200–203, arginine 213, and tyrosine 292; that span reads FGEY.

Belongs to the NAD(P)-dependent epimerase/dehydratase family. HldD subfamily. In terms of assembly, homopentamer. The cofactor is NADP(+).

It catalyses the reaction ADP-D-glycero-beta-D-manno-heptose = ADP-L-glycero-beta-D-manno-heptose. It participates in nucleotide-sugar biosynthesis; ADP-L-glycero-beta-D-manno-heptose biosynthesis; ADP-L-glycero-beta-D-manno-heptose from D-glycero-beta-D-manno-heptose 7-phosphate: step 4/4. Catalyzes the interconversion between ADP-D-glycero-beta-D-manno-heptose and ADP-L-glycero-beta-D-manno-heptose via an epimerization at carbon 6 of the heptose. In Burkholderia vietnamiensis (strain G4 / LMG 22486) (Burkholderia cepacia (strain R1808)), this protein is ADP-L-glycero-D-manno-heptose-6-epimerase.